Reading from the N-terminus, the 225-residue chain is Lipoprotein-releasing system ATP-binding protein LolD (225 aa).

An ABC transporter domain is found at 5 to 225 (LEVMDLTKGY…RLVDGRVVAD (221 aa)). 41-48 (GASGTGKS) provides a ligand contact to ATP.

It belongs to the ABC transporter superfamily. Lipoprotein translocase (TC 3.A.1.125) family. The complex is composed of two ATP-binding proteins (LolD) and two transmembrane proteins (LolC and LolE).

It localises to the cell inner membrane. Its function is as follows. Part of the ABC transporter complex LolCDE involved in the translocation of mature outer membrane-directed lipoproteins, from the inner membrane to the periplasmic chaperone, LolA. Responsible for the formation of the LolA-lipoprotein complex in an ATP-dependent manner. The protein is Lipoprotein-releasing system ATP-binding protein LolD of Geobacter metallireducens (strain ATCC 53774 / DSM 7210 / GS-15).